The chain runs to 3210 residues: PF 1022-synthetase (3210 aa).

The condensation 1 stretch occupies residues 68–454 (VDDRRHAIGH…VKELDVVTAE (387 aa)). The segment at 483 to 876 (AGDPNKAAVF…GRKDSQVKIR (394 aa)) is adenylation 1. The region spanning 1010–1086 (APATGIEVKL…GLVDVIGRDP (77 aa)) is the Carrier 1 domain. Ser-1047 is subject to O-(pantetheine 4'-phosphoryl)serine. Positions 1104–1534 (SFAQGRLWFL…RTPIAVLPLT (431 aa)) are condensation 2. Positions 1563-2023 (FRKQVAAHPH…GRMDQQVKIR (461 aa)) are adenylation 2. Residues 2081-2236 (EGWKDFFESN…YLLEVVESLV (156 aa)) form an S-adenosyl-L-methionine-dependent N-methyltransferase region. Carrier domains lie at 2570 to 2644 (DPFV…RQGL) and 2668 to 2742 (TPSD…RLTQ). O-(pantetheine 4'-phosphoryl)serine is present on residues Ser-2604 and Ser-2702. Positions 2788–3203 (LDVYPATQMQ…KRMLEELCGN (416 aa)) are condensation 3. The disordered stretch occupies residues 2976 to 3002 (VIKGNNNTTPPPPPQQQSTPSGAHHAS).

It belongs to the NRP synthetase family. Pantetheine 4'-phosphate serves as cofactor.

The catalysed reaction is 2 (R)-3-phenyllactate + 2 (R)-lactate + 4 L-leucine + 4 S-adenosyl-L-methionine + 8 ATP = PF1022A + 8 AMP + 4 S-adenosyl-L-homocysteine + 8 diphosphate + 8 H(+). It carries out the reaction 4 (R)-3-phenyllactate + 4 L-leucine + 4 S-adenosyl-L-methionine + 8 ATP = PF1022B + 8 AMP + 4 S-adenosyl-L-homocysteine + 8 diphosphate + 8 H(+). It catalyses the reaction 3 (R)-3-phenyllactate + (R)-lactate + 4 L-leucine + 4 S-adenosyl-L-methionine + 8 ATP = PF1022C + 8 AMP + 4 S-adenosyl-L-homocysteine + 8 diphosphate + 8 H(+). The enzyme catalyses (R)-3-phenyllactate + 3 (R)-lactate + 4 L-leucine + 4 S-adenosyl-L-methionine + 8 ATP = PF1022D + 8 AMP + 4 S-adenosyl-L-homocysteine + 8 diphosphate + 8 H(+). The catalysed reaction is 4 (R)-lactate + 4 L-leucine + 4 S-adenosyl-L-methionine + 8 ATP = PF1022F + 8 AMP + 4 S-adenosyl-L-homocysteine + 8 diphosphate + 8 H(+). Functionally, nonribosomal peptide synthetase that synthesizes cyclooctadepsipeptides (CODPs) PF 1022 that show powerful broad-spectrum anthelmintic activity with low toxicity in animals. Couples 4 N-methyl-L-leucines and a varying content of alpha-D-hydroxy acids (D-lactates or D-phenyllactates) in an alternative fashion. The enzyme is capable of synthesizing all known natural cyclooctadepsipeptides of the PF1022 type differing in the content of D-lactate and D-phenyllactate, using from 4 D-lactates (PF 1022F) to 4 D-phenyllactates (PF 1022B), respectively. The formation of different PF-related compounds is mainly controlled by the molar ratio of the hydroxy acids. N-methylation of the substrate L-leucine takes place after covalent binding prior to peptide bond formation. This chain is PF 1022-synthetase, found in Rosellinia sp. (Mycelia sterilia).